The following is a 1032-amino-acid chain: Leucine-rich repeat and coiled-coil domain-containing protein 1 (1032 aa).

LRR repeat units follow at residues 44-65, 66-87, 88-109, 110-131, and 136-157; these read TLHA…DHIW, NLQH…NTLT, KLCT…EELI, NLTR…IPLH, and KLRY…LQCM. Residues 175–218 enclose the LRRCT domain; that stretch reads NPVCRLPGYRAVILQTLPQLRILDCKNIFGEPVNLTEINSSQLQ. The interval 316 to 345 is disordered; it reads DNVLEKDPRPKRDTDITSESDYGNRKECNR. The span at 318 to 330 shows a compositional bias: basic and acidic residues; it reads VLEKDPRPKRDTD. Residues 421-647 are a coiled coil; sequence NTYQSLVEQL…DLENEFRIAL (227 aa).

The protein belongs to the LRRCC1 family.

The protein localises to the cytoplasm. Its subcellular location is the cytoskeleton. The protein resides in the microtubule organizing center. It is found in the centrosome. It localises to the centriole. Required for the organization of the mitotic spindle. Maintains the structural integrity of centrosomes during mitosis. This Homo sapiens (Human) protein is Leucine-rich repeat and coiled-coil domain-containing protein 1 (LRRCC1).